The following is a 463-amino-acid chain: MTKPFSVVLASLLAITSTVSPLASAQQSQPLDRIAAIVDEDVVLQSELDRAVRNVKSQYAGRENQLPPDDVLQRQVLERLVLVKLQVSRADGNGIRVSDEELNRAIASIAQQNGTTVDGLRQKLAADGMGYADFRASVRDEIIVQRLRQSFAQSRISVSEGEVDTALAQQAATGSQYHLAHILIGLPEGANAEQIATGQKKVDGVKALIDKGELDFSAAAVRYSDSPNALEGGDLGWRSLDEIPNAFAQLIRDMQPGQVAGPLRGPSGFQLLKLVEMRDANAGGEKKMVTEYHARHILVRIGDNQTEAQAKAKIDTIRARIVGGADFQATAKESSEDTNSRGQGGDLGWFPADAFGPDFGKQVESLTDGAVSEPFRTQAGWHIVQRVGSRQTDVSAENQRAQVRETIGRRKLEEEYNRYLQELRGEAYVSYRTGDRADDNATAAPAKSPDPAAPSPPPAKPTR.

The first 25 residues, 1–25 (MTKPFSVVLASLLAITSTVSPLASA), serve as a signal peptide directing secretion. 2 consecutive PpiC domains span residues 174 to 276 (GSQY…KLVE) and 289 to 388 (VTEY…QRVG). Disordered regions lie at residues 329-348 (ATAKESSEDTNSRGQGGDLG) and 431-463 (YRTGDRADDNATAAPAKSPDPAAPSPPPAKPTR). The segment covering 441 to 450 (ATAAPAKSPD) has biased composition (low complexity). The segment covering 451–463 (PAAPSPPPAKPTR) has biased composition (pro residues).

The protein localises to the periplasm. The catalysed reaction is [protein]-peptidylproline (omega=180) = [protein]-peptidylproline (omega=0). In terms of biological role, chaperone involved in the correct folding and assembly of outer membrane proteins. Recognizes specific patterns of aromatic residues and the orientation of their side chains, which are found more frequently in integral outer membrane proteins. May act in both early periplasmic and late outer membrane-associated steps of protein maturation. The sequence is that of Chaperone SurA from Xanthomonas axonopodis pv. citri (strain 306).